The following is a 366-amino-acid chain: Phospho-N-acetylmuramoyl-pentapeptide-transferase (366 aa).

The next 10 membrane-spanning stretches (helical) occupy residues 27–47 (GAAI…ISLL), 76–96 (PTMG…IWVI), 101–121 (FFWL…WDDF), 136–156 (IKLL…LADP), 176–196 (IDIG…SSNA), 205–225 (GLAA…SYIS), 241–261 (GAGE…GFLW), 264–284 (CYPA…SALG), 285–305 (VVAI…IFVI), and 343–363 (AVTV…LSSL).

Belongs to the glycosyltransferase 4 family. MraY subfamily. It depends on Mg(2+) as a cofactor.

The protein resides in the cell inner membrane. It carries out the reaction UDP-N-acetyl-alpha-D-muramoyl-L-alanyl-gamma-D-glutamyl-meso-2,6-diaminopimeloyl-D-alanyl-D-alanine + di-trans,octa-cis-undecaprenyl phosphate = di-trans,octa-cis-undecaprenyl diphospho-N-acetyl-alpha-D-muramoyl-L-alanyl-D-glutamyl-meso-2,6-diaminopimeloyl-D-alanyl-D-alanine + UMP. Its pathway is cell wall biogenesis; peptidoglycan biosynthesis. Its function is as follows. Catalyzes the initial step of the lipid cycle reactions in the biosynthesis of the cell wall peptidoglycan: transfers peptidoglycan precursor phospho-MurNAc-pentapeptide from UDP-MurNAc-pentapeptide onto the lipid carrier undecaprenyl phosphate, yielding undecaprenyl-pyrophosphoryl-MurNAc-pentapeptide, known as lipid I. This is Phospho-N-acetylmuramoyl-pentapeptide-transferase from Methylacidiphilum infernorum (isolate V4) (Methylokorus infernorum (strain V4)).